A 275-amino-acid polypeptide reads, in one-letter code: Large ribosomal subunit protein uL2 (275 aa).

Positions 223 to 275 (AAMNANDHPHGGGEAKAGQGNPHPVTPWGVPTKGYKTRKNKRTQQFIVRDRRG) are disordered.

This sequence belongs to the universal ribosomal protein uL2 family. In terms of assembly, part of the 50S ribosomal subunit. Forms a bridge to the 30S subunit in the 70S ribosome.

One of the primary rRNA binding proteins. Required for association of the 30S and 50S subunits to form the 70S ribosome, for tRNA binding and peptide bond formation. It has been suggested to have peptidyltransferase activity; this is somewhat controversial. Makes several contacts with the 16S rRNA in the 70S ribosome. This chain is Large ribosomal subunit protein uL2, found in Xanthomonas campestris pv. campestris (strain 8004).